A 476-amino-acid polypeptide reads, in one-letter code: Probable isoprenylcysteine alpha-carbonyl methylesterase ICMEL1 (476 aa).

Positions 92–104 (NCLSAFSDDTNGT) are enriched in polar residues. The tract at residues 92–116 (NCLSAFSDDTNGTADGGNNSGDRQT) is disordered. 2 helical membrane-spanning segments follow: residues 153-173 (FMAL…VGYY) and 208-228 (VVAF…GSLL). Residues 214 to 216 (GGA) and 285 to 287 (QSA) contribute to the substrate site. Active-site residues include serine 286, aspartate 388, and histidine 420.

The protein belongs to the AB hydrolase superfamily. Isoprenylcysteine methylesterase family. Expressed in roots, rosette and cauline leaves, stems, flowers and siliques.

It is found in the endoplasmic reticulum membrane. The protein resides in the golgi apparatus membrane. The enzyme catalyses [protein]-C-terminal S-[(2E,6E)-farnesyl]-L-cysteine methyl ester + H2O = [protein]-C-terminal S-[(2E,6E)-farnesyl]-L-cysteine + methanol + H(+). Its function is as follows. Catalyzes the demethylation of isoprenylcysteine methylesters. May be involved in the regulation of ABA signaling. This chain is Probable isoprenylcysteine alpha-carbonyl methylesterase ICMEL1, found in Arabidopsis thaliana (Mouse-ear cress).